We begin with the raw amino-acid sequence, 316 residues long: tRNA-cytidine(32) 2-sulfurtransferase (316 aa).

The PP-loop motif motif lies at Ser58–Ser63. [4Fe-4S] cluster is bound by residues Cys133, Cys136, and Cys224.

The protein belongs to the TtcA family. Homodimer. The cofactor is Mg(2+). [4Fe-4S] cluster serves as cofactor.

It localises to the cytoplasm. It carries out the reaction cytidine(32) in tRNA + S-sulfanyl-L-cysteinyl-[cysteine desulfurase] + AH2 + ATP = 2-thiocytidine(32) in tRNA + L-cysteinyl-[cysteine desulfurase] + A + AMP + diphosphate + H(+). Its pathway is tRNA modification. Its function is as follows. Catalyzes the ATP-dependent 2-thiolation of cytidine in position 32 of tRNA, to form 2-thiocytidine (s(2)C32). The sulfur atoms are provided by the cysteine/cysteine desulfurase (IscS) system. This chain is tRNA-cytidine(32) 2-sulfurtransferase, found in Aromatoleum aromaticum (strain DSM 19018 / LMG 30748 / EbN1) (Azoarcus sp. (strain EbN1)).